Consider the following 325-residue polypeptide: Ribosomal RNA small subunit methyltransferase H (325 aa).

S-adenosyl-L-methionine contacts are provided by residues 39–41 (GGH), Asp-59, Phe-90, Asp-108, and Gln-115.

The protein belongs to the methyltransferase superfamily. RsmH family.

It is found in the cytoplasm. The enzyme catalyses cytidine(1402) in 16S rRNA + S-adenosyl-L-methionine = N(4)-methylcytidine(1402) in 16S rRNA + S-adenosyl-L-homocysteine + H(+). Its function is as follows. Specifically methylates the N4 position of cytidine in position 1402 (C1402) of 16S rRNA. The protein is Ribosomal RNA small subunit methyltransferase H of Leptothrix cholodnii (strain ATCC 51168 / LMG 8142 / SP-6) (Leptothrix discophora (strain SP-6)).